A 572-amino-acid polypeptide reads, in one-letter code: MLRNCLRKLGNHQTKCSVKTLHTPIYRTKNLQVLRDTLSGIKLLEKIITSSSYNKTLIYEPKYKSKPQVVSSHDTMRLHNVMRELLDSLQVDEATNTRLQSNRPRKLGRVGLQLFMDCIQDNLTATSTSLTCSLLEHYFKYPEKEVTNGIKAGLRYIRDFLAKNKIIVKSQNDVDALVEQLTMSSSDSQSIKRVLKAINYELFSDDIVRVINGNKTYDEVDVSKGWKYPAGILDSNEAYLRSLELPTKKLVSIDKDMLVLMYDGTLRDANKILPTITYARKLRKSVLLIVNGDCTGDALTSVTINNNRNKRENNESRIVVLKYSKKANNDLAPQENLDFIKFLRLPCGYDSIYSPEYSPLVPSKMCADKYYGSIESIKATTGEAFLYNSIDAEAIPNKVPKSFLQNTVTLSIGGHNEIEIDRRRNAIDNCLNNVLCHGLAKGFIPGYGISLLKAIPGLNELKANEPNFMTKVGINAVLSAVILPSEVAFKNAYGYNYYEINSLIAGAINEKSFPMAKFSPNSEPVNTVKDGNLEPWSKMDSCLAGVETFIELLTSCNTIITCVYKKPERHKA.

Residues methionine 1–cysteine 16 constitute a mitochondrion transit peptide. Topologically, residues serine 17–lysine 471 are mitochondrial matrix. A helical transmembrane segment spans residues valine 472 to alanine 488. At phenylalanine 489–alanine 572 the chain is on the mitochondrial intermembrane side.

It belongs to the chaperonin (HSP60) family. Forms a high molecular mass protein complex of approximately 850 kDa.

It is found in the mitochondrion inner membrane. Its function is as follows. Chaperone. Required for the assembly of succinate dehydrogenase subunits. Ensures mitochondrial gene expression at elevated temperatures and prevents heat-aggregation of the ribosomal subunit VAR1. This Saccharomyces cerevisiae (strain ATCC 204508 / S288c) (Baker's yeast) protein is Mitochondrial chaperone TCM62 (TCM62).